The following is a 56-amino-acid chain: Ovomucoid (56 aa).

Residues 6–56 (VDCSEYPKPECTAEERPICGSDNKTYGNKCNFCNAVVESNGTLTLRNFGKC) enclose the Kazal-like domain. Disulfide bonds link C8-C38, C16-C35, and C24-C56. N45 carries an N-linked (GlcNAc...) asparagine glycan.

The protein resides in the secreted. The protein is Ovomucoid of Bambusicola thoracicus (Chinese bamboo-partridge).